A 417-amino-acid polypeptide reads, in one-letter code: Cobalamin binding intrinsic factor (417 aa).

The signal sequence occupies residues 1 to 18; that stretch reads MAWFALYLLSLLWATAGT. 3 cysteine pairs are disulfide-bonded: C26/C246, C103/C288, and C143/C182. D171 lines the cob(II)alamin pocket. Residue S191 is modified to Phosphoserine. Cob(II)alamin contacts are provided by D222 and Q270. N311, N330, and N334 each carry an N-linked (GlcNAc...) asparagine glycan. Cob(II)alamin-binding positions include 365–370 and 386–395; these read SWGLVV and WQFLSGVTPL. Residue N413 is glycosylated (N-linked (GlcNAc...) asparagine).

Belongs to the eukaryotic cobalamin transport proteins family. In terms of assembly, interacts with CUBN (via CUB domains). As to expression, gastric mucosa.

The protein resides in the secreted. Functionally, promotes absorption of the essential vitamin cobalamin (Cbl) in the ileum. After interaction with CUBN, the CBLIF-cobalamin complex is internalized via receptor-mediated endocytosis. The chain is Cobalamin binding intrinsic factor from Homo sapiens (Human).